A 336-amino-acid chain; its full sequence is MIYRLARSVFFQLDAEKAHDLAIQNFSRFTGTPLDLFYRQHVPDRPVEVMGIKFKNPVGLAAGLDKNGECIDAFGAMGFGFVEVGTVTPRPQSGNEKPRLFRVLPAEGLINRFGFNNLGVDNLVENVKKSKYDGVIGINIGKNKDTPIEKGAEDYLICMDKVYEHAGYIAVNISSPNTPGLRSLQYGEALDDLLSQLKAKQEELAAKHGKYVPLALKIAPDLEDHEIVQIAESLIKNKIDGVIGTNTTLDRTLVKGMPHCDEMGGLSGRPLQNRSTEVIRRLAEELNGALPIIGVGGIDSAISAREKMNAGAQLVQIYSGFIYHGPKLVKDIVMNS.

FMN is bound by residues 62–66 and T86; that span reads AGLDK. K66 serves as a coordination point for substrate. 111-115 serves as a coordination point for substrate; it reads NRFGF. 2 residues coordinate FMN: N139 and N172. Residue N172 participates in substrate binding. S175 acts as the Nucleophile in catalysis. Position 177 (N177) interacts with substrate. FMN contacts are provided by K217 and T245. 246-247 is a binding site for substrate; the sequence is NT. FMN is bound by residues G268, G297, and 318-319; that span reads YS.

This sequence belongs to the dihydroorotate dehydrogenase family. Type 2 subfamily. In terms of assembly, monomer. FMN serves as cofactor.

Its subcellular location is the cell membrane. The catalysed reaction is (S)-dihydroorotate + a quinone = orotate + a quinol. It functions in the pathway pyrimidine metabolism; UMP biosynthesis via de novo pathway; orotate from (S)-dihydroorotate (quinone route): step 1/1. In terms of biological role, catalyzes the conversion of dihydroorotate to orotate with quinone as electron acceptor. The chain is Dihydroorotate dehydrogenase (quinone) from Photobacterium profundum (strain SS9).